The following is a 68-amino-acid chain: Serine rich endogenous peptide 13 (68 aa).

The signal sequence occupies residues 1–31; it reads MATKASNLVVFLLSLLLLFLLISFQVGVADA. The disordered stretch occupies residues 33–68; that stretch reads RNKRQGQEQRVDYDYPRPPTAPIYLPPSKSRKGKGP. Residues 37-47 are compositionally biased toward basic and acidic residues; that stretch reads QGQEQRVDYDY. Positions 48–57 are enriched in pro residues; it reads PRPPTAPIYL. Positions 54–68 match the SCOOP motif motif; sequence PIYLPPSKSRKGKGP. A SxS motif essential for MIK2 binding motif is present at residues 60 to 62; the sequence is SKS.

It belongs to the serine rich endogenous peptide (SCOOP) phytocytokine family. Interacts with MIK2 (via extracellular leucine-rich repeat domain); this interaction triggers the formation of complex between MIK2 and the BAK1/SERK3 and SERK4 coreceptors, and subsequent BAK1 activation by phosphorylation. Mostly expressed in stems and flowers and, to a lower extent, in seedlings shoots, roots, siliques, seeds and leaves.

It is found in the cell membrane. Its subcellular location is the secreted. The protein resides in the extracellular space. The protein localises to the apoplast. In terms of biological role, brassicaceae-specific phytocytokine (plant endogenous peptide released into the apoplast) perceived by MIK2 in a BAK1/SERK3 and SERK4 coreceptors-dependent manner, that modulates various physiological and antimicrobial processes including growth prevention and reactive oxygen species (ROS) response regulation. Promotes the expression of immune-related marker genes (e.g. WRKY30, WRKY33 and CYP81F2) in a MIK2-dependent manner. Inhibits root growth and regulates root meristems. Prevents general growth and development. Exhibits antibacterial effects against Pseudomonas syringae pv. tomato DC3000, Ralstonia solanacearum, Bacillus subtilis and Agrobacterium tumefaciens, thus being an antimicrobial peptide (AMP). In Arabidopsis thaliana (Mouse-ear cress), this protein is Serine rich endogenous peptide 13.